A 396-amino-acid polypeptide reads, in one-letter code: Succinyl-diaminopimelate desuccinylase (396 aa).

His-74 lines the Zn(2+) pocket. Asp-76 is a catalytic residue. Zn(2+) is bound at residue Asp-107. The active-site Proton acceptor is Glu-142. Residues Glu-143, Glu-171, and His-360 each coordinate Zn(2+).

This sequence belongs to the peptidase M20A family. DapE subfamily. Homodimer. Zn(2+) is required as a cofactor. Requires Co(2+) as cofactor.

The catalysed reaction is N-succinyl-(2S,6S)-2,6-diaminopimelate + H2O = (2S,6S)-2,6-diaminopimelate + succinate. It functions in the pathway amino-acid biosynthesis; L-lysine biosynthesis via DAP pathway; LL-2,6-diaminopimelate from (S)-tetrahydrodipicolinate (succinylase route): step 3/3. Catalyzes the hydrolysis of N-succinyl-L,L-diaminopimelic acid (SDAP), forming succinate and LL-2,6-diaminopimelate (DAP), an intermediate involved in the bacterial biosynthesis of lysine and meso-diaminopimelic acid, an essential component of bacterial cell walls. The polypeptide is Succinyl-diaminopimelate desuccinylase (Methylobacterium sp. (strain 4-46)).